A 179-amino-acid chain; its full sequence is Large ribosomal subunit protein uL5 (179 aa).

This sequence belongs to the universal ribosomal protein uL5 family. As to quaternary structure, part of the 50S ribosomal subunit; part of the 5S rRNA/L5/L18/L25 subcomplex. Contacts the 5S rRNA and the P site tRNA. Forms a bridge to the 30S subunit in the 70S ribosome.

Its function is as follows. This is one of the proteins that bind and probably mediate the attachment of the 5S RNA into the large ribosomal subunit, where it forms part of the central protuberance. In the 70S ribosome it contacts protein S13 of the 30S subunit (bridge B1b), connecting the 2 subunits; this bridge is implicated in subunit movement. Contacts the P site tRNA; the 5S rRNA and some of its associated proteins might help stabilize positioning of ribosome-bound tRNAs. This Cellvibrio japonicus (strain Ueda107) (Pseudomonas fluorescens subsp. cellulosa) protein is Large ribosomal subunit protein uL5.